A 307-amino-acid chain; its full sequence is Elongation factor Ts (307 aa).

The involved in Mg(2+) ion dislocation from EF-Tu stretch occupies residues 79–82 (TDFV).

The protein belongs to the EF-Ts family.

Its subcellular location is the cytoplasm. Its function is as follows. Associates with the EF-Tu.GDP complex and induces the exchange of GDP to GTP. It remains bound to the aminoacyl-tRNA.EF-Tu.GTP complex up to the GTP hydrolysis stage on the ribosome. The protein is Elongation factor Ts (tsf) of Bartonella quintana (strain Toulouse) (Rochalimaea quintana).